We begin with the raw amino-acid sequence, 57 residues long: Small ribosomal subunit protein eS31 (57 aa).

Positions 29, 32, 47, and 50 each coordinate Zn(2+). The C4-type zinc finger occupies 29–50 (CSRCGKGTYMSEHKDRNTCGKC).

The protein belongs to the eukaryotic ribosomal protein eS31 family. In terms of assembly, part of the 30S ribosomal subunit. Zn(2+) is required as a cofactor.

The sequence is that of Small ribosomal subunit protein eS31 from Nitrosopumilus maritimus (strain SCM1).